The primary structure comprises 87 residues: Retinal rod rhodopsin-sensitive cGMP 3',5'-cyclic phosphodiesterase subunit gamma (87 aa).

At M1 the chain carries N-acetylmethionine. A compositionally biased stretch (basic and acidic residues) spans 1–12 (MNLEPPKGEIRS). The interval 1 to 55 (MNLEPPKGEIRSATRVIGGPVTPRKGPPKFKQRQTRQFKSKPPKKGVQGFGDDIP) is disordered. Over residues 26 to 44 (GPPKFKQRQTRQFKSKPPK) the composition is skewed to basic residues.

Belongs to the rod/cone cGMP-PDE gamma subunit family. Oligomer composed of two catalytic chains (alpha and beta), an inhibitory chain (gamma) and the delta chain.

The enzyme catalyses 3',5'-cyclic GMP + H2O = GMP + H(+). Functionally, participates in processes of transmission and amplification of the visual signal. cGMP-PDEs are the effector molecules in G-protein-mediated phototransduction in vertebrate rods and cones. The protein is Retinal rod rhodopsin-sensitive cGMP 3',5'-cyclic phosphodiesterase subunit gamma (Pde6g) of Mus musculus (Mouse).